Consider the following 447-residue polypeptide: ATP-dependent protease ATPase subunit HslU (447 aa).

Residues Ile17, 59 to 64 (GVGKTE), Asp256, Glu321, and Arg393 contribute to the ATP site.

Belongs to the ClpX chaperone family. HslU subfamily. A double ring-shaped homohexamer of HslV is capped on each side by a ring-shaped HslU homohexamer. The assembly of the HslU/HslV complex is dependent on binding of ATP.

Its subcellular location is the cytoplasm. In terms of biological role, ATPase subunit of a proteasome-like degradation complex; this subunit has chaperone activity. The binding of ATP and its subsequent hydrolysis by HslU are essential for unfolding of protein substrates subsequently hydrolyzed by HslV. HslU recognizes the N-terminal part of its protein substrates and unfolds these before they are guided to HslV for hydrolysis. The polypeptide is ATP-dependent protease ATPase subunit HslU (Stutzerimonas stutzeri (strain A1501) (Pseudomonas stutzeri)).